Reading from the N-terminus, the 1126-residue chain is Ubiquitin carboxyl-terminal hydrolase 16/45 (1126 aa).

Over residues 1–15 the composition is skewed to basic and acidic residues; the sequence is MVKKRQADSRDHDCS. Positions 1–44 are disordered; it reads MVKKRQADSRDHDCSTDSGNEDLHHRKGLGSPGQSDGATPTTAS. The segment covering 32-44 has biased composition (polar residues); sequence PGQSDGATPTTAS. The UBP-type zinc finger occupies 43 to 181; the sequence is ASCQHIKKAV…ELVKKLAQKP (139 aa). Zn(2+) is bound by residues Cys-45, His-47, Cys-70, Cys-73, Cys-111, Cys-114, Cys-119, His-126, His-130, His-139, Cys-152, and Cys-155. 2 stretches are compositionally biased toward low complexity: residues 215–229 and 254–264; these read GGSF…SLAA and SSGLSTSDSLT. A disordered region spans residues 215 to 264; the sequence is GGSFDDSSSRGSLAAAGGGGGVGSSRNRQVAIPMPPPEPSSGLSTSDSLT. Catalysis depends on Cys-315, which acts as the Nucleophile. Disordered regions lie at residues 513–547, 570–762, and 795–833; these read KPQP…INTK, ASLG…SGSS, and EQGA…ARTK. Low complexity predominate over residues 524 to 539; the sequence is PELSLTSSSSSVTPST. Residues 586-598 are compositionally biased toward basic residues; sequence QRKAKRAAKKRQK. Composition is skewed to low complexity over residues 599-614 and 646-657; these read SSLN…GNEL and TEDSTTSSVTTS. The segment covering 674-701 has biased composition (polar residues); sequence APSTNNVPSSTASLTAPSKTYMDSNGNA. A compositionally biased stretch (basic and acidic residues) spans 705 to 718; that stretch reads GEKRDDTPEHMDKD. Residues 730–762 are compositionally biased toward low complexity; that stretch reads ATSPAPTATNSSTSTSATGNNNSVAGSGLSGSS. A compositionally biased stretch (basic and acidic residues) spans 807-816; the sequence is GEAKAIEQPE. The span at 821-830 shows a compositional bias: low complexity; the sequence is QAQAMAQAQA. His-984 acts as the Proton acceptor in catalysis. The tract at residues 1037–1089 is disordered; that stretch reads LKVLDDSDDFSNSSSNSSTSDESQTPATPLEEQQTQQAQQPQQPQQLEEAANV. Positions 1046–1086 are enriched in low complexity; sequence FSNSSSNSSTSDESQTPATPLEEQQTQQAQQPQQPQQLEEA.

This sequence belongs to the peptidase C19 family.

The catalysed reaction is Thiol-dependent hydrolysis of ester, thioester, amide, peptide and isopeptide bonds formed by the C-terminal Gly of ubiquitin (a 76-residue protein attached to proteins as an intracellular targeting signal).. Involved in the regulation of DNA damage repair. This Drosophila melanogaster (Fruit fly) protein is Ubiquitin carboxyl-terminal hydrolase 16/45.